The following is a 251-amino-acid chain: MKILIILSIILCSLFGRADLEYVDNDIYTYNGGRNENGCLEVYDPYEKFNRKVFAFNSVLDYIIFRPLAVGYKNITNDYIKARVNSFISNVYTPLTVVNYGLQLNYDKTMKSVWRFLINTTLGIGGLFDVASKVGLQSDRQTFGSTLAHYGVAPGPYLVLPIIGSTNARDMTDSVITNYAINPLMYYTHNDFDLWILAVSKITDRYIVLPFSDYVMKNSTDPYVAIRSALHRAREASVQYPENFKCPKPKN.

The signal sequence occupies residues 1-18; it reads MKILIILSIILCSLFGRA.

The protein belongs to the MlaA family.

This is an uncharacterized protein from Rickettsia prowazekii (strain Madrid E).